A 502-amino-acid chain; its full sequence is tRNA-2-methylthio-N(6)-dimethylallyladenosine synthase (502 aa).

Positions 12 to 129 (RTYQVRTYGC…LPVLLERARH (118 aa)) constitute an MTTase N-terminal domain. Positions 21, 58, 92, 166, 170, and 173 each coordinate [4Fe-4S] cluster. The Radical SAM core domain maps to 152–383 (RESTYAGWVS…ACVEEITWAE (232 aa)). A TRAM domain is found at 385-455 (RRLVGETVEV…PHHLNADGEP (71 aa)). The segment at 451-502 (ADGEPLAHRRTPAGDAAEAGRRPRTAGVSLGLPTVGAPPSPVPPAASSACAC) is disordered.

The protein belongs to the methylthiotransferase family. MiaB subfamily. In terms of assembly, monomer. [4Fe-4S] cluster is required as a cofactor.

The protein localises to the cytoplasm. The enzyme catalyses N(6)-dimethylallyladenosine(37) in tRNA + (sulfur carrier)-SH + AH2 + 2 S-adenosyl-L-methionine = 2-methylsulfanyl-N(6)-dimethylallyladenosine(37) in tRNA + (sulfur carrier)-H + 5'-deoxyadenosine + L-methionine + A + S-adenosyl-L-homocysteine + 2 H(+). Functionally, catalyzes the methylthiolation of N6-(dimethylallyl)adenosine (i(6)A), leading to the formation of 2-methylthio-N6-(dimethylallyl)adenosine (ms(2)i(6)A) at position 37 in tRNAs that read codons beginning with uridine. This is tRNA-2-methylthio-N(6)-dimethylallyladenosine synthase from Salinispora arenicola (strain CNS-205).